The chain runs to 357 residues: Homeobox protein HMX3 (357 aa).

Disordered stretches follow at residues Met1–Pro58 and Leu129–Lys229. The segment covering Pro16 to Lys27 has biased composition (pro residues). 2 stretches are compositionally biased toward basic and acidic residues: residues Pro130–Leu140 and Thr149–Asp173. Ser153 and Ser180 each carry phosphoserine. The segment covering Ala191–Ala209 has biased composition (low complexity). Over residues Glu210–Pro223 the composition is skewed to basic and acidic residues. Positions Lys227–Leu286 form a DNA-binding region, homeobox.

Belongs to the HMX homeobox family.

The protein resides in the nucleus. Its function is as follows. Transcription factor involved in specification of neuronal cell types and which is required for inner ear and hypothalamus development. Binds to the 5'-CAAGTG-3' core sequence. Controls semicircular canal formation in the inner ear. Also required for hypothalamic/pituitary axis of the CNS. This is Homeobox protein HMX3 (HMX3) from Homo sapiens (Human).